A 1607-amino-acid chain; its full sequence is Laminin subunit gamma-1 (1607 aa).

The N-terminal stretch at 1–33 is a signal peptide; sequence MTGGGRAALALQPRGRLWPLLAVLAAVAGCVRA. The 240-residue stretch at 44–283 folds into the Laminin N-terminal domain; sequence RPQRCMPEFV…AISDFAVGGR (240 aa). N58 and N132 each carry an N-linked (GlcNAc...) asparagine glycan. Disulfide bonds link C284-C293, C286-C303, C305-C314, C340-C349, C342-C365, C368-C377, C380-C393, C396-C408, C398-C414, C416-C425, C428-C440, C443-C454, C445-C461, C463-C472, and C475-C490. 4 Laminin EGF-like domains span residues 284-339, 340-395, 396-442, and 443-492; these read CKCN…ESLP, CDCN…ACSP, CHCS…GCRP, and CSCD…GCTP. The region spanning 493–502 is the Laminin EGF-like 5; first part domain; the sequence is CFCFGHSSVC. One can recognise a Laminin IV type A domain in the interval 512-687; the sequence is DISSTFQIDE…PGVPATWVES (176 aa). N-linked (GlcNAc...) asparagine glycans are attached at residues N574 and N648. The region spanning 688-721 is the Laminin EGF-like 5; second part domain; sequence CTCPVGYGGQFCETCLPGYRRETPSLGPYSPCVL. 24 disulfides stabilise this stretch: C722-C731, C724-C738, C740-C749, C752-C768, C771-C779, C773-C790, C793-C802, C805-C823, C826-C840, C828-C847, C850-C859, C862-C879, C882-C896, C884-C903, C905-C914, C917-C930, C933-C945, C935-C952, C954-C963, C966-C978, C981-C993, C983-C999, C1001-C1010, and C1013-C1026. Laminin EGF-like domains follow at residues 722-770 and 771-825; these read CTCN…DCQP and CPCP…LCRP. The 56-residue stretch at 826 to 881 folds into the Laminin EGF-like 8; nidogen-binding domain; it reads CQCNDNIDPNAVGNCNRLTGECLKCIYNTAGFYCDRCKEGFFGNPLAPNPADKCKA. 3 consecutive Laminin EGF-like domains span residues 882-932, 933-980, and 981-1028; these read CACN…GCER, CDCH…GCKP, and CDCH…GCQE. N-linked (GlcNAc...) asparagine glycosylation is found at N1020 and N1105. A domain II and I region spans residues 1029 to 1607; the sequence is CPACYRLVKD…CFNTPSIEKP (579 aa). A coiled-coil region spans residues 1034-1594; it reads RLVKDKAAEH…HNLEDIKKTL (561 aa). At S1147 the chain carries Phosphoserine. N1159, N1173, N1203, N1221, N1239, N1378, N1393, and N1437 each carry an N-linked (GlcNAc...) asparagine glycan. S1491 is modified (phosphoserine).

Laminin is a complex glycoprotein, consisting of three different polypeptide chains (alpha, beta, gamma), which are bound to each other by disulfide bonds into a cross-shaped molecule comprising one long and three short arms with globules at each end. Gamma-1 is a subunit of laminin-1 (laminin-111 or EHS laminin), laminin-2 (laminin-211 or merosin), laminin-3 (laminin-121 or S-laminin), laminin-4 (laminin-221 or S-merosin), laminin-6 (laminin-311 or K-laminin), laminin-7 (laminin-321 or KS-laminin), laminin-8 (laminin-411), laminin-9 (laminin-421), laminin-10 (laminin-511) and laminin-11 (laminin-521). Interacts with SVEP1. In terms of tissue distribution, found in the basement membranes (major component).

The protein resides in the secreted. Its subcellular location is the extracellular space. It is found in the extracellular matrix. The protein localises to the basement membrane. Its function is as follows. Binding to cells via a high affinity receptor, laminin is thought to mediate the attachment, migration and organization of cells into tissues during embryonic development by interacting with other extracellular matrix components. The sequence is that of Laminin subunit gamma-1 (Lamc1) from Mus musculus (Mouse).